Here is a 901-residue protein sequence, read N- to C-terminus: Nuclear factor of activated T-cells, cytoplasmic 4 (901 aa).

Disordered stretches follow at residues 15-179 (LVFG…LSSW) and 203-362 (NEAA…EDSV). The segment covering 61–81 (IPRPPPPRPGMHSPPPRPAPS) has biased composition (pro residues). Positions 96 to 109 (GGPGGNAGGAGGGR) are enriched in gly residues. The segment at 114-119 (PSIRIT) is calcineurin-binding. A compositionally biased stretch (low complexity) spans 114–123 (PSIRITSISP). Over residues 151–165 (GFGGYREAGGQGGGA) the composition is skewed to gly residues. Residues 166–179 (FFSPSPGSSSLSSW) are compositionally biased toward low complexity. Phosphoserine; by MAPK7 and MAPK14 occurs at positions 168 and 170. Residues Ser213 and Ser217 each carry the phosphoserine; by MAPK8 and MAPK9 modification. The stretch at 213-229 (SPLPSPRASPRPWTPED) is one SP 1 repeat. Positions 213–293 (SPLPSPRASP…LSRRGSLGEE (81 aa)) are 2 approximate SP repeats. Composition is skewed to pro residues over residues 215–227 (LPSP…PWTP) and 254–263 (GPVPASPRPA). A Nuclear localization signal motif is present at residues 268–270 (KRR). The segment covering 272-288 (SSSGTPSSASPALSRRG) has biased composition (low complexity). The stretch at 277-293 (PSSASPALSRRGSLGEE) is one SP 2; approximate repeat. Ser289 bears the Phosphoserine mark. Ser334 carries the post-translational modification Phosphoserine; by RPS6KA3. Phosphoserine is present on Ser344. The RHD domain maps to 401–582 (SALPPLDWPL…VPIECSQRSA (182 aa)). The DNA-binding element occupies 430–437 (RAHYETEG). Positions 586–683 (PQVETYSPSA…KRSPTQSFKF (98 aa)) constitute an IPT/TIG domain. A Nuclear localization signal motif is present at residues 672–674 (RRK). Lys689 participates in a covalent cross-link: Glycyl lysine isopeptide (Lys-Gly) (interchain with G-Cter in SUMO2). Disordered stretches follow at residues 695 to 721 (DSSL…PRPP) and 827 to 869 (PQSA…FRDS).

As to quaternary structure, member of the multicomponent NFATC transcription complex that consists of at least two components, a pre-existing cytoplasmic component NFATC2 and an inducible nuclear component NFATC1. Other NFAT proteins, such as NFATC3, or members of the activating protein-1 (AP-1) family and MAF can also bind the complex. NFAT proteins can bind DNA as monomers or dimers. Component of a promoter-binding complex composed of STAT3, NFATC3 and NFATC4; complex formation is enhanced by calcineurin. Interacts with CREBBP; this interaction potentiates transcription activation. Interacts with MAPK8/JNK1 and MAPK9/JNK2. Interacts with GATA4 (via the second Zn finger). Interacts (via N-terminus) with IRAK1 (via C-terminus). Interacts with RPS6KA3. Interacts with HOMER1, HOMER2 and HOMER3; this interaction competes with calcineurin/PPP3CA-binding and hence prevents NFATC4 dephosphorylation and activation. Interacts with ESR1 and ESR2; this interaction decreases NFATC4 transcriptional activity. Interacts with MTOR and MAPK7/ERK5. Interacts with TRIM17; this interaction prevents NFATC3 nuclear localization. Interacts with TCF25 (via C-terminus); the interaction leads to suppression of NFATC4 transcription factor activity and is reduced following stimulation with angiotensin-2. Post-translationally, phosphorylated by NFATC-kinases; dephosphorylated by calcineurin/PPP3CA. Phosphorylated on Ser-168 and Ser-170 by MTOR, IRAK1, MAPK7/ERK5 and MAPK14/p38, on Ser-213 and Ser-217 by MAPK8 and MAPK9, and on Ser-289 and Ser-344 by RPS6KA3. Phosphorylated by GSK3B. Phosphorylation by GSK3B markedly increases NFATC4 ubiquitination. Phosphorylation by MAPK8/JNK1, MAPK9/JNK2 and RPS6KA3 may stimulate NFATC4 transcriptional activity. Phosphorylation at Ser-168 and Ser-170 is stimulated by UV irradiation. In terms of processing, ubiquitinated, leading to degradation by the proteasome. Ubiquitination may be stimulated by GSK3B-dependent phosphorylation. Polyubiquitin linkage mainly occurs through 'Lys-48'. As to expression, widely expressed. In the brain, expressed in neurons. Expressed in the hippocampus (at protein level). In the hippocampus, expressed in both the CA1-CA3 pyramidal cells and the dentate gyrus granular cells. Expressed in a subset of hippocampal cells representing adult-born neurons (at protein level). Expressed in the submandibular gland (at protein level). In the olfactory system, expressed at low levels in the glomerular and granular layers and in the mitral cell layer. In the cerebellum, expressed at moderate levels in granular neurons. Expressed at moderate levels in the choroid plexus and ependymal cells. Expressed in neurons of the cochlear nucleus (at protein level). Expressed at low levels in the heart (at protein level). Expressed in ventricular cardiomyocytes (at protein level). Expressed in the lung.

The protein resides in the cytoplasm. It localises to the nucleus. Its function is as follows. Ca(2+)-regulated transcription factor that is involved in several processes, including the development and function of the immune, cardiovascular, musculoskeletal, and nervous systems. Involved in T-cell activation, stimulating the transcription of cytokine genes, including that of IL2 and IL4. Following JAK/STAT signaling activation and as part of a complex with NFATC3 and STAT3, binds to the alpha-beta E4 promoter region of CRYAB and activates transcription in cardiomyocytes. Along with NFATC3, involved in embryonic heart development. Involved in mitochondrial energy metabolism required for cardiac morphogenesis and function. Transactivates many genes involved in heart physiology. Along with GATA4, binds to and activates NPPB/BNP promoter. Activates NPPA/ANP/ANF and MYH7/beta-MHC transcription. Binds to and transactivates AGTR2 gene promoter. Involved in the regulation of adult hippocampal neurogenesis. Involved in BDNF-driven pro-survival signaling in hippocampal adult-born neurons. Involved in the formation of long-term spatial memory and long-term potentiation. In cochlear nucleus neurons, may play a role in deafferentation-induced apoptosis during a developmental critical period when auditory neurons depend on afferent input for survival. Binds to and activates the BACE1/Beta-secretase 1 promoter, hence may regulate the proteolytic processing of the amyloid precursor protein (APP). Plays a role in adipocyte differentiation. May be involved in myoblast differentiation into myotubes. Binds the consensus DNA sequence 5'-GGAAAAT-3'. In the presence of CREBBP, activates TNF transcription. Binds to PPARG gene promoter and regulates its activity. Binds to PPARG and REG3G gene promoters. The sequence is that of Nuclear factor of activated T-cells, cytoplasmic 4 from Mus musculus (Mouse).